A 180-amino-acid polypeptide reads, in one-letter code: V-type proton ATPase subunit c''1 (180 aa).

Residues 1–26 (MSGVVALGHASSWGAALVRISPYTFS) lie on the Lumenal side of the membrane. The chain crosses the membrane as a helical span at residues 27-47 (AIGIAISIGVSVLGAAWGIYI). Topologically, residues 48–66 (TGSSLIGAAIEAPRITSKN) are cytoplasmic. Residues 67–87 (LISVIFCEAVAIYGVIVAIIL) traverse the membrane as a helical segment. The Lumenal portion of the chain corresponds to 88–110 (QTKLESVPSSKMYDAESLRAGYA). Residues 111 to 131 (IFASGIIVGFANLVCGLCVGI) traverse the membrane as a helical segment. The Cytoplasmic portion of the chain corresponds to 132-149 (IGSSCALSDAQNSTLFVK). Residues 150–170 (ILVIEIFGSALGLFGVIVGII) form a helical membrane-spanning segment. Residues 171 to 180 (MSAQATWPTK) lie on the Lumenal side of the membrane.

It belongs to the V-ATPase proteolipid subunit family. V-ATPase is a heteromultimeric enzyme composed of a peripheral catalytic V1 complex (components A to H) attached to an integral membrane V0 proton pore complex (components: a, c, c'', d and e). The proteolipid components c and c'' are present as a hexameric ring that forms the proton-conducting pore. As to expression, preferentially expressed in roots.

The protein localises to the endoplasmic reticulum membrane. It localises to the golgi apparatus membrane. Functionally, proton-conducting pore forming subunit of the membrane integral V0 complex of vacuolar ATPase. V-ATPase is responsible for acidifying a variety of intracellular compartments in eukaryotic cells. The polypeptide is V-type proton ATPase subunit c''1 (VHA-c''1) (Arabidopsis thaliana (Mouse-ear cress)).